A 262-amino-acid chain; its full sequence is Hydroxyethylthiazole kinase (262 aa).

Methionine 43 provides a ligand contact to substrate. ATP-binding residues include arginine 118 and threonine 164. Alanine 191 contacts substrate.

It belongs to the Thz kinase family. Requires Mg(2+) as cofactor.

It catalyses the reaction 5-(2-hydroxyethyl)-4-methylthiazole + ATP = 4-methyl-5-(2-phosphooxyethyl)-thiazole + ADP + H(+). Its pathway is cofactor biosynthesis; thiamine diphosphate biosynthesis; 4-methyl-5-(2-phosphoethyl)-thiazole from 5-(2-hydroxyethyl)-4-methylthiazole: step 1/1. Catalyzes the phosphorylation of the hydroxyl group of 4-methyl-5-beta-hydroxyethylthiazole (THZ). This chain is Hydroxyethylthiazole kinase, found in Cereibacter sphaeroides (strain ATCC 17029 / ATH 2.4.9) (Rhodobacter sphaeroides).